The primary structure comprises 589 residues: Putative phospholipase B-like 2 (589 aa).

Residues 1–41 (MVGQMYCYPGSHLARALTRALALALVLALLVGPFLSGLAGA) form the signal peptide. 2 N-linked (GlcNAc...) asparagine glycosylation sites follow: Asn88 and Asn110. Cysteines 142 and 152 form a disulfide. N-linked (GlcNAc...) asparagine glycosylation is found at Asn231, Asn436, and Asn465. A disulfide bond links Cys492 and Cys495. Asn515 carries an N-linked (GlcNAc...) asparagine glycan.

The protein belongs to the phospholipase B-like family. Interacts with IGF2R. In terms of processing, the p76 protein is synthesized as a 80 kDa precursor which is then processed into a N-terminal 32 kDa form and a C-terminal 45 kDa form. Glycosylated; contains mannose 6-phosphate sugars. In terms of tissue distribution, ubiquitously expressed, with highest levels in heart, brain and liver.

Its subcellular location is the lysosome lumen. Its function is as follows. Putative phospholipase. The protein is Putative phospholipase B-like 2 (PLBD2) of Homo sapiens (Human).